A 137-amino-acid polypeptide reads, in one-letter code: NADPH-dependent 7-cyano-7-deazaguanine reductase (137 aa).

The active-site Thioimide intermediate is the Cys-51. Catalysis depends on Asp-58, which acts as the Proton donor. Residues 73-75 (VEL) and 92-93 (HE) each bind substrate.

It belongs to the GTP cyclohydrolase I family. QueF type 1 subfamily.

It is found in the cytoplasm. It catalyses the reaction 7-aminomethyl-7-carbaguanine + 2 NADP(+) = 7-cyano-7-deazaguanine + 2 NADPH + 3 H(+). The protein operates within tRNA modification; tRNA-queuosine biosynthesis. Functionally, catalyzes the NADPH-dependent reduction of 7-cyano-7-deazaguanine (preQ0) to 7-aminomethyl-7-deazaguanine (preQ1). The sequence is that of NADPH-dependent 7-cyano-7-deazaguanine reductase from Gloeobacter violaceus (strain ATCC 29082 / PCC 7421).